Consider the following 158-residue polypeptide: Cytochrome c-type biogenesis protein CcmE (158 aa).

Over 1-8 (MMRHRNRR) the chain is Cytoplasmic. Residues 9–29 (LATIAASAIVLVVAVGLGLMA) form a helical; Signal-anchor for type II membrane protein membrane-spanning segment. Topologically, residues 30-158 (LRSAVVFFYS…PSAAGDGDSR (129 aa)) are periplasmic. The heme site is built by H123 and Y127. The tract at residues 139–158 (AGVWQGEGETPSAAGDGDSR) is disordered.

It belongs to the CcmE/CycJ family.

The protein resides in the cell inner membrane. Heme chaperone required for the biogenesis of c-type cytochromes. Transiently binds heme delivered by CcmC and transfers the heme to apo-cytochromes in a process facilitated by CcmF and CcmH. In Maricaulis maris (strain MCS10) (Caulobacter maris), this protein is Cytochrome c-type biogenesis protein CcmE.